Consider the following 308-residue polypeptide: MDWGRFVEEKVREIRETVGDSKAIIALSGGVDSSTAAVLAHKAIGDRLHAVFVNTGFLRKGEPEFVVKTFRDEFGMNLHYVDAQDRFFSALKGVTDPEEKRKIIGRVFIEVFEEVAKKIGAEYLIQGTIAPDWIESQGKIKSHHNVGGLPEKLNLKLIEPLRDLYKDEVRELAKFLGLPEKIYNRMPFPGPGLAVRVIGEVTPEKIRIVREANAIVEEEVERAGLRPWQAFAVLLGVKTVGVQGDIRAYKETIAVRIVESIDGMTANAMNVPWEVLQRIAFRITSEIPEVGRVLYDITNKPPATIEFE.

One can recognise a GMPS ATP-PPase domain in the interval 1–185 (MDWGRFVEEK…LGLPEKIYNR (185 aa)). An ATP-binding site is contributed by 28–34 (SGGVDSS).

As to quaternary structure, heterodimer composed of a glutamine amidotransferase subunit (A) and a GMP-binding subunit (B).

It carries out the reaction XMP + L-glutamine + ATP + H2O = GMP + L-glutamate + AMP + diphosphate + 2 H(+). The protein operates within purine metabolism; GMP biosynthesis; GMP from XMP (L-Gln route): step 1/1. Its function is as follows. Catalyzes the synthesis of GMP from XMP. The chain is GMP synthase [glutamine-hydrolyzing] subunit B (guaAB) from Pyrococcus horikoshii (strain ATCC 700860 / DSM 12428 / JCM 9974 / NBRC 100139 / OT-3).